Consider the following 335-residue polypeptide: D-alanine--D-alanine ligase (335 aa).

An ATP-grasp domain is found at 124–330 (KMWFSALGVP…FTEYLSDVIS (207 aa)). Residue 154–209 (AFDTWGSVFIKAASQGSSVGCYKVDVRDNIAKVLEEAFGYAPYVVVEKTIKARELE) coordinates ATP. Asp-284, Glu-297, and Asn-299 together coordinate Mg(2+).

Belongs to the D-alanine--D-alanine ligase family. Mg(2+) is required as a cofactor. Mn(2+) serves as cofactor.

The protein localises to the cytoplasm. The enzyme catalyses 2 D-alanine + ATP = D-alanyl-D-alanine + ADP + phosphate + H(+). It participates in cell wall biogenesis; peptidoglycan biosynthesis. Its function is as follows. Cell wall formation. The chain is D-alanine--D-alanine ligase from Shewanella denitrificans (strain OS217 / ATCC BAA-1090 / DSM 15013).